The sequence spans 274 residues: Rhamnulose-1-phosphate aldolase (274 aa).

E117 is an active-site residue. 3 residues coordinate Zn(2+): H141, H143, and H212.

It belongs to the aldolase class II family. RhaD subfamily. In terms of assembly, homotetramer. The cofactor is Zn(2+).

The protein resides in the cytoplasm. It carries out the reaction L-rhamnulose 1-phosphate = (S)-lactaldehyde + dihydroxyacetone phosphate. It participates in carbohydrate degradation; L-rhamnose degradation; glycerone phosphate from L-rhamnose: step 3/3. In terms of biological role, catalyzes the reversible cleavage of L-rhamnulose-1-phosphate to dihydroxyacetone phosphate (DHAP) and L-lactaldehyde. The protein is Rhamnulose-1-phosphate aldolase of Yersinia pestis.